The sequence spans 69 residues: Large ribosomal subunit protein bL31 (69 aa).

Positions 16, 18, 36, and 39 each coordinate Zn(2+).

It belongs to the bacterial ribosomal protein bL31 family. Type A subfamily. Part of the 50S ribosomal subunit. Requires Zn(2+) as cofactor.

Binds the 23S rRNA. The chain is Large ribosomal subunit protein bL31 from Thermosipho africanus (strain TCF52B).